A 502-amino-acid chain; its full sequence is Actin nucleation-promoting factor WAS (502 aa).

Positions 39–148 constitute a WH1 domain; the sequence is LGRKCLTLAT…ALVQEKIQKR (110 aa). The segment at 146-240 is disordered; the sequence is QKRNQRQSGD…KKISKADIGA (95 aa). Over residues 201–211 the composition is skewed to polar residues; the sequence is DIQNPDITSSR. Ser221 bears the Phosphoserine mark. The CRIB domain occupies 238 to 251; that stretch reads IGAPSGFKHVSHVG. Position 291 is a phosphotyrosine; by FYN and HCK (Tyr291). The segment at 307–502 is disordered; it reads MRRQEPLPPP…DEDEDDEWDD (196 aa). GRSGPLPPXP motif repeat units lie at residues 337-346 and 376-385; these read GRSGPLPPVP and GRSGPLPPPP. Positions 341–419 are enriched in pro residues; the sequence is PLPPVPLGIA…PAPPPLPPAL (79 aa). One can recognise a WH2 domain in the interval 430–447; that stretch reads GRGALLDQIRQGIQLNKT. 2 positions are modified to phosphoserine; by CK2: Ser483 and Ser484. The segment covering 486 to 502 has biased composition (acidic residues); sequence EGEDQAGDEDEDDEWDD.

As to quaternary structure, binds the Arp2/3 complex. Interacts with CDC42, RAC, NCK, HCK, FYN, SRC kinase FGR, BTK, ABL1, PSTPIP1, WIP, and to the p85 subunit of PLC-gamma. Interacts (via C-terminus) with ALDOA. Interacts with NCK1 (via SH3 domains). Interacts with FCHSD2. (Microbial infection) Interacts with E.coli effector protein EspF(U). In terms of processing, phosphorylated at Tyr-291 by FYN and HCK, inducing WAS effector activity after TCR engagement. Phosphorylation at Tyr-291 enhances WAS activity in promoting actin polymerization and filopodia formation. As to expression, expressed predominantly in the thymus. Also found, to a much lesser extent, in the spleen.

Its subcellular location is the cytoplasm. The protein resides in the cytoskeleton. It is found in the nucleus. In terms of biological role, effector protein for Rho-type GTPases that regulates actin filament reorganization via its interaction with the Arp2/3 complex. Important for efficient actin polymerization. Possible regulator of lymphocyte and platelet function. Mediates actin filament reorganization and the formation of actin pedestals upon infection by pathogenic bacteria. In addition to its role in the cytoplasmic cytoskeleton, also promotes actin polymerization in the nucleus, thereby regulating gene transcription and repair of damaged DNA. Promotes homologous recombination (HR) repair in response to DNA damage by promoting nuclear actin polymerization, leading to drive motility of double-strand breaks (DSBs). The protein is Actin nucleation-promoting factor WAS (WAS) of Homo sapiens (Human).